Reading from the N-terminus, the 265-residue chain is MRYYTQVVAASLVATLAVVDSIVFADRGNKLRFLRQDGATVTRGGKGEERTGTAGSVESLTNLANLYFDSNLSSRVIKKMLEEHDGHQPVLAMIEKRFQERGAQKYMYLDEGLVTRETAEKKFIEWILEGKTKKQVKKEFGISSEPGNESAVELQESAIKAYGDWLEDLNGRSWDLENTAASKAFAYLYGKHVSRDWILGMFKAWATEGTPLKVAKNHLFKEPMRPFDMFQEENFVAYVTYAKMLREKIKSISPPRRDPVPTASN.

Residues 1-25 form the signal peptide; sequence MRYYTQVVAASLVATLAVVDSIVFA. Positions 32–50 match the RxLR-dEER motif; it reads RFLRQDGATVTRGGKGEER. 2 N-linked (GlcNAc...) asparagine glycosylation sites follow: Asn71 and Asn148.

Belongs to the RxLR effector family.

The protein resides in the secreted. It localises to the host nucleus. It is found in the host cytoplasm. Secreted effector that completely suppresses the host cell death induced by cell death-inducing proteins. This Plasmopara viticola (Downy mildew of grapevine) protein is Secreted RxLR effector protein 146.